A 496-amino-acid chain; its full sequence is MSDFLAYLTSAPSRPHGSANITDKCYDHQLRDLIAYLKQPGVAPSTADINGYLEAISPAVHSLSYLYLLRIRIQQLQEKTAVGVPNDLQPGGTLWNQTVKFLRSFDPIQIRYVGHEWRELVDSVANAALSVSKPILAVKMIRDALERLNTAGVFTSLHLMLVKLALLSSSYTYVLPVLDKLLCHFPSDTQNAHAGILLCSEHEPSTVFFTDSSGFSANLTYRDHLQFYMYSGMVYMALKKWDQASHCLGIVISAPTANSVSKIMVEAYKKWVLANLLGHGKLFSVPNLVAPHVTRVYQSLSKPYISLAEAFEKRDFQRLRTEISLGQTIWRADKNSGLVYQVFEAYDKFLIIKLGKTFSALTMPDVLQRASSCSKGSRDIEEFVVSLVMTKELRAKLSHSPGNETTTMLRFPLSSQSHALREEHIRFRLIQKEAALNTISRAITQTKITLETSHENLQVIAKNQKLAGSSERSGVVGSTEADGGGDLDEDLMGDGR.

The 169-residue stretch at 243-411 (QASHCLGIVI…GNETTTMLRF (169 aa)) folds into the PCI domain. The segment at 468–496 (GSSERSGVVGSTEADGGGDLDEDLMGDGR) is disordered. Residues 483-496 (GGGDLDEDLMGDGR) are compositionally biased toward acidic residues.

This sequence belongs to the CSN3 family. As to quaternary structure, component of the COP9 signalosome (CSN) complex.

It is found in the cytoplasm. Its subcellular location is the nucleus. Component of the COP9 signalosome (CSN) complex that acts as an regulator of the ubiquitin (Ubl) conjugation pathway by mediating the deneddylation of the cullin subunit of SCF-type E3 ubiquitin-protein ligase complexes. The CSN complex seems to link protein degradation to sexual development. The sequence is that of COP9 signalosome complex subunit 3 (csnC) from Emericella nidulans (strain FGSC A4 / ATCC 38163 / CBS 112.46 / NRRL 194 / M139) (Aspergillus nidulans).